The chain runs to 63 residues: 2-hydroxymuconate tautomerase (63 aa).

Pro-2 serves as the catalytic Proton acceptor; via imino nitrogen.

This sequence belongs to the 4-oxalocrotonate tautomerase family. As to quaternary structure, homohexamer.

It catalyses the reaction (2Z,4E)-2-hydroxyhexa-2,4-dienedioate = (3E)-2-oxohex-3-enedioate. Its pathway is xenobiotic degradation; toluene degradation. It participates in xenobiotic degradation; xylene degradation. In terms of biological role, catalyzes the ketonization of 2-hydroxymuconate stereoselectively to yield 2-oxo-3-hexenedioate. The sequence is that of 2-hydroxymuconate tautomerase (xylH) from Pseudomonas putida (Arthrobacter siderocapsulatus).